Reading from the N-terminus, the 41-residue chain is Large ribosomal subunit protein bL36 (41 aa).

It belongs to the bacterial ribosomal protein bL36 family.

The polypeptide is Large ribosomal subunit protein bL36 (Rhodopseudomonas palustris (strain BisA53)).